Reading from the N-terminus, the 456-residue chain is Alcohol acyltransferase 16 (456 aa).

Active-site proton acceptor residues include histidine 167 and aspartate 382.

This sequence belongs to the plant acyltransferase family. In terms of tissue distribution, expressed in fruit.

The catalysed reaction is 3-(methylsulfanyl)propanoyl-CoA + butan-1-ol = butyl 3-(methylsulfanyl)propanoate + CoA. It catalyses the reaction ethanol + benzoyl-CoA = ethyl benzoate + CoA. The enzyme catalyses butan-1-ol + benzoyl-CoA = butyl benzoate + CoA. It carries out the reaction 2-(methylsulfanyl)acetyl-CoA + butan-1-ol = butyl 2-(methylsulfanyl)acetate + CoA. Involved in the biosynthesis of volatile esters which confer kiwifruit flavor. Alcohol acyl transferase that can use a wide range of alcohols as substrate to produce esters. Exhibits benzoyl-CoA:alcohol O-acyltransferase activity. The chain is Alcohol acyltransferase 16 from Actinidia chinensis var. chinensis (Chinese soft-hair kiwi).